The sequence spans 467 residues: Multiple inositol polyphosphate phosphatase 1 (467 aa).

Positions 1–15 (MRLLILLLLPLVAIA) are cleaved as a signal peptide. H67 is a catalytic residue. N-linked (GlcNAc...) asparagine glycosylation is found at N120, N159, and N234. G441 carries GPI-anchor amidated glycine lipidation. Residues 442 to 467 (GAPSLGSGVGGLLATTLAAMLVYLMH) constitute a propeptide, removed in mature form.

This sequence belongs to the histidine acid phosphatase family. MINPP1 subfamily. N-glycosylated.

It localises to the cell membrane. The protein localises to the apical cell membrane. Its subcellular location is the basolateral cell membrane. The protein resides in the cell projection. It is found in the filopodium. It localises to the cell junction. It carries out the reaction (2R)-2,3-bisphosphoglycerate + H2O = (2R)-2-phosphoglycerate + phosphate. It catalyses the reaction 1D-myo-inositol hexakisphosphate + H2O = 1D-myo-inositol 1,2,4,5,6-pentakisphosphate + phosphate. The catalysed reaction is 1D-myo-inositol 1,2,4,5,6-pentakisphosphate + H2O = 1D-myo-inositol 1,2,5,6-tetrakisphosphate + phosphate. The enzyme catalyses 1D-myo-inositol 1,2,5,6-tetrakisphosphate + H2O = 1D-myo-inositol 1,2,6-trisphosphate + phosphate. In terms of biological role, probable multiple inositol polyphosphate phosphatase that hydrolyzes 1D-myo-inositol 1,3,4,5,6-pentakisphosphate (InsP5[2OH]) and 1D-myo-inositol hexakisphosphate (InsP6) to a range of less phosphorylated inositol phosphates. This regulates the availability of these various small molecule second messengers and metal chelators which control many aspects of cell physiology. May have a dual substrate specificity, and function as a 2,3-bisphosphoglycerate 3-phosphatase hydrolyzing 2,3-bisphosphoglycerate to 2-phosphoglycerate. 2,3-bisphosphoglycerate (BPG) is formed as part of the Rapoport-Luebering glycolytic bypass. Has a role in embryonic tracheal development where it localizes to the leading edge of actively migrating branches. In these leading cells, enhances formation and/or maintenance of filopodia which may drive branch migration and elongation by cell-cell intercalation. The function in tracheal morphogenesis is dependent on its inositol polyphosphate phosphatase activity. The sequence is that of Multiple inositol polyphosphate phosphatase 1 from Drosophila melanogaster (Fruit fly).